A 542-amino-acid polypeptide reads, in one-letter code: TNF receptor-associated factor 6 (542 aa).

The segment at Met-1–Ile-374 is interaction with TAX1BP1. The segment at Cys-71–Asn-110 adopts an RING-type; degenerate zinc-finger fold. Lys-125 participates in a covalent cross-link: Glycyl lysine isopeptide (Lys-Gly) (interchain with G-Cter in SUMO); alternate. Residue Lys-125 forms a Glycyl lysine isopeptide (Lys-Gly) (interchain with G-Cter in ubiquitin); alternate linkage. Lys-143 participates in a covalent cross-link: Glycyl lysine isopeptide (Lys-Gly) (interchain with G-Cter in SUMO). 2 TRAF-type zinc fingers span residues Glu-151 to Glu-203 and Ile-204 to Ala-260. Residues Ser-310–Gln-368 are a coiled coil. Lys-339 participates in a covalent cross-link: Glycyl lysine isopeptide (Lys-Gly) (interchain with G-Cter in ubiquitin). The region spanning Asn-370 to Val-519 is the MATH domain. An interaction with TANK region spans residues Trp-375–Ile-542. A Glycyl lysine isopeptide (Lys-Gly) (interchain with G-Cter in SUMO) cross-link involves residue Lys-473.

The protein belongs to the TNF receptor-associated factor family. A subfamily. In terms of assembly, homotrimer. Homooligomer. N-terminal region is dimeric while C-terminal region is trimeric; maybe providing a mode of oligomerization. Upon IL1B treatment, forms a complex with PELI1, IRAK1, IRAK4 and MYD88; this complex recruits MAP3K7/TAK1, TAB1 and TAB2 to mediate NF-kappa-B activation. Direct binding of SMAD6 to PELI1 prevents the complex formation and hence negatively regulates IL1R-TLR signaling and eventually NF-kappa-B-mediated gene expression. Binds to TNFRSF5/CD40 and TNFRSF11A/RANK. Associates with NGFR, TNFRSF17, IRAK2, IRAK3, RIPK2, MAP3K1, MAP3K5, MAP3K14, CSK, TRAF, TRAF-interacting protein TRIP and TNF receptor associated protein TDP2. Interacts with IL17R. Interacts with SQSTM1 bridging NTRK1 and NGFR. Forms a ternary complex with SQSTM1 and PRKCZ. Interacts with PELI2 and PELI3. Binds UBE2V1. Interacts with TAX1BP1; this interaction mediates deubiquitination of TRAF6 and inhibition of NF-kappa-B activation. Interacts with ZNF675. Interacts with ARRB1 and ARRB2. Interacts with MAP3K7 and TAB1/MAP3K7IP1; during IL-1 signaling. Interacts with UBE2N. Interacts with TGFBR1, HDAC1 and RANGAP1. Interacts with AKT1, AKT2 and AKT3. Interacts (via TRAF domains) with NUMBL (via C-terminal). Interacts with RBCK1. Interacts with LIMD1 (via LIM domains). Interacts with RSAD2/viperin. Interacts (via C-terminus) with EIF2AK2/PKR (via the kinase catalytic domain). Interacts with ZFAND5. Interacts with IL1RL1. Interacts with TRAFD1. Interacts with AJUBA. Interacts with MAVS/IPS1. Interacts (via TRAF domains) with DYNC2I2 (via WD domains). Interacts with IFIT3 (via N-terminus). Interacts with TICAM2. Interacts with CARD14. Interacts with CD40 and MAP3K8; the interaction is required for ERK activation. Interacts with TICAM1 and this interaction is enhanced in the presence of WDFY1. Interacts with TANK; this interaction increases in response to DNA damage. Interacts with USP10; this interaction increases in response to DNA damage. Interacts with ZC3H12A; this interaction increases in response to DNA damage and is stimulated by TANK. Interacts with WDFY3. Interacts with TRIM13. Interacts with GPS2. Interacts (via C-terminus) with SASH1. Interacts with LRRC19. Interacts with IL17RA and TRAF3IP2. Interacts with TOMM70. Interacts with AMBRA1; interaction is required to mediate 'Lys-63'-linked ubiquitination of ULK1. Interacts with CRBN; this interaction inhibits TLR4-mediated signaling by preventing TRAF6-mediated ubiquitination of ECSIT. In terms of processing, sumoylated on Lys-125, Lys-143 and Lys-473 with SUMO1. Post-translationally, polyubiquitinated on Lys-125 by TRAF3IP2; after cell stimulation with IL17A. Polyubiquitinated on Lys-125; after cell stimulation with IL1B or TGFB. This ligand-induced cell stimulation leads to dimerization/oligomerization of TRAF6 molecules, followed by auto-ubiquitination which involves UBE2N and UBE2V1 and leads to TRAF6 activation. This 'Lys-63' site-specific poly-ubiquitination appears to be associated with the activation of signaling molecules. Endogenous autoubiquitination occurs only for the cytoplasmic form. Deubiquitinated by USP10 in a TANK-dependent manner, leading to the negative regulation of NF-kappa-B signaling upon DNA damage. LRRC19 induces 'Lys-63' ubiquitination. Ubiquitinated at Lys-339 by the SCF(FBXL2) complex, leading to its degradation by the proteasome.

It is found in the cytoplasm. It localises to the cell cortex. Its subcellular location is the nucleus. The protein localises to the lipid droplet. The enzyme catalyses S-ubiquitinyl-[E2 ubiquitin-conjugating enzyme]-L-cysteine + [acceptor protein]-L-lysine = [E2 ubiquitin-conjugating enzyme]-L-cysteine + N(6)-ubiquitinyl-[acceptor protein]-L-lysine.. The protein operates within protein modification; protein ubiquitination. Its function is as follows. E3 ubiquitin ligase that, together with UBE2N and UBE2V1, mediates the synthesis of 'Lys-63'-linked-polyubiquitin chains conjugated to proteins, such as ECSIT, IKBKG, IRAK1, AKT1 and AKT2. Also mediates ubiquitination of free/unanchored polyubiquitin chain that leads to MAP3K7 activation. Leads to the activation of NF-kappa-B and JUN. Seems to also play a role in dendritic cells (DCs) maturation and/or activation. Represses c-Myb-mediated transactivation, in B-lymphocytes. Adapter protein that seems to play a role in signal transduction initiated via TNF receptor, IL-1 receptor and IL-17 receptor. Regulates osteoclast differentiation by mediating the activation of adapter protein complex 1 (AP-1) and NF-kappa-B, in response to RANK-L stimulation. Together with MAP3K8, mediates CD40 signals that activate ERK in B-cells and macrophages, and thus may play a role in the regulation of immunoglobulin production. Acts as a regulator of the JNK and NF-kappa-B signaling pathways by initiating assembly of heterotypic 'Lys-63'-/'Lys-48'-linked branched ubiquitin chains that are then recognized by TAB2: TRAF6 catalyzes initial 'Lys-63'-linked-polyubiquitin chains that are then branched via 'Lys-48'-linked polyubiquitin by HUWE1. 'Lys-63'-/'Lys-48'-linked branched ubiquitin chains protect 'Lys-63'-linkages from CYLD deubiquitination. Also participates in the TCR signaling by ubiquitinating LAT. This chain is TNF receptor-associated factor 6 (TRAF6), found in Bos taurus (Bovine).